A 275-amino-acid polypeptide reads, in one-letter code: Large ribosomal subunit protein uL2 (275 aa).

Positions 223 to 275 are disordered; the sequence is VAMNPVDHPHGGGEGRTGEGRVPVSPWGTPAKGYRTRNNKRTDNMIVRRRHSK. Residues 229–241 show a composition bias toward basic and acidic residues; it reads DHPHGGGEGRTGE.

This sequence belongs to the universal ribosomal protein uL2 family. As to quaternary structure, part of the 50S ribosomal subunit. Forms a bridge to the 30S subunit in the 70S ribosome.

In terms of biological role, one of the primary rRNA binding proteins. Required for association of the 30S and 50S subunits to form the 70S ribosome, for tRNA binding and peptide bond formation. It has been suggested to have peptidyltransferase activity; this is somewhat controversial. Makes several contacts with the 16S rRNA in the 70S ribosome. The chain is Large ribosomal subunit protein uL2 from Laribacter hongkongensis (strain HLHK9).